We begin with the raw amino-acid sequence, 635 residues long: Glutamine sensor PIB2 (635 aa).

Residues 1-110 form a disordered region; sequence MTALHSVSKT…GTGFVDRKQQ (110 aa). The tract at residues 1–164 is may play a role in attenuating TORC1 signaling; sequence MTALHSVSKT…KTLPFTDDQR (164 aa). Basic and acidic residues predominate over residues 33 to 44; sequence RNHDYRGRKGDE. A phosphoserine mark is found at serine 46 and serine 53. Residue threonine 56 is modified to Phosphothreonine. Residues 67 to 85 are compositionally biased toward polar residues; it reads STHSEQSILSSISLKSMVN. Serine 73, serine 113, serine 124, serine 148, serine 165, and serine 174 each carry phosphoserine. 2 disordered regions span residues 123-181 and 224-254; these read NSAE…VSRG and SSNL…TSKV. A compositionally biased stretch (low complexity) spans 238-254; that stretch reads SSSSSTSSVSSSSTSKV. 3 positions are modified to phosphoserine: serine 300, serine 309, and serine 381. The segment at 304 to 440 is required for interaction with TORC1; that stretch reads LPQPASSTNL…PTISNRNSAR (137 aa). The FYVE-type; atypical zinc-finger motif lies at 452-527; the sequence is DSKRNSCRYC…ICDDCLVEYE (76 aa). Zn(2+)-binding residues include cysteine 458, cysteine 461, cysteine 474, cysteine 477, cysteine 482, histidine 485, cysteine 519, and cysteine 522. Disordered regions lie at residues 534-557 and 570-623; these read HNAN…DNRK and ALFR…GSVI. 2 stretches are compositionally biased toward acidic residues: residues 543 to 553 and 601 to 616; these read INVEEGEDDDN and EEAD…EEGN. The tract at residues 620 to 635 is may be required for TORC1 activation; it reads GSVIGSVPANWNWSSF.

Interacts with the TORC1 complex when activated by glutamine or cysteine. Interacts with TOR1; glutamine enhances the interaction. Interacts with KOG1; glutamine enhances the interaction. Interacts with TCO89. Interacts with LST8; glutamine enhances the interaction. Interacts with TOR2; glutamine enhances the interaction.

The protein resides in the vacuole membrane. Its activity is regulated as follows. Activated by glutamine. May also be activated by cysteine. Functionally, functions as an intracellular glutamine sensor that directly activates the TORC1 signaling pathway, to promote cell growth when glutamine is available. May play a role in repressing NPR1 activity independently of TORC1 signaling. This chain is Glutamine sensor PIB2, found in Saccharomyces cerevisiae (strain ATCC 204508 / S288c) (Baker's yeast).